We begin with the raw amino-acid sequence, 326 residues long: D-alanine--D-alanine ligase (326 aa).

The ATP-grasp domain maps to 112-312; that stretch reads KRIWRFEGLP…YENLCLGILA (201 aa). 138-193 is an ATP binding site; it reads LQALGAPMIVKPSREGSTIGLTKVWTAEECDQAYVLASRYDPEVLCEEFIEGDETT. Residues Asp265, Glu279, and Asn281 each coordinate Mg(2+).

Belongs to the D-alanine--D-alanine ligase family. Mg(2+) is required as a cofactor. The cofactor is Mn(2+).

It localises to the cytoplasm. The enzyme catalyses 2 D-alanine + ATP = D-alanyl-D-alanine + ADP + phosphate + H(+). It participates in cell wall biogenesis; peptidoglycan biosynthesis. Functionally, cell wall formation. The chain is D-alanine--D-alanine ligase from Delftia acidovorans (strain DSM 14801 / SPH-1).